The following is a 292-amino-acid chain: 4-hydroxy-tetrahydrodipicolinate synthase (292 aa).

Pyruvate is bound at residue Thr-45. Catalysis depends on Tyr-133, which acts as the Proton donor/acceptor. The Schiff-base intermediate with substrate role is filled by Lys-161. Ile-203 contacts pyruvate.

This sequence belongs to the DapA family. In terms of assembly, homotetramer; dimer of dimers.

The protein localises to the cytoplasm. It carries out the reaction L-aspartate 4-semialdehyde + pyruvate = (2S,4S)-4-hydroxy-2,3,4,5-tetrahydrodipicolinate + H2O + H(+). The protein operates within amino-acid biosynthesis; L-lysine biosynthesis via DAP pathway; (S)-tetrahydrodipicolinate from L-aspartate: step 3/4. Its function is as follows. Catalyzes the condensation of (S)-aspartate-beta-semialdehyde [(S)-ASA] and pyruvate to 4-hydroxy-tetrahydrodipicolinate (HTPA). This is 4-hydroxy-tetrahydrodipicolinate synthase from Nitrosococcus oceani (strain ATCC 19707 / BCRC 17464 / JCM 30415 / NCIMB 11848 / C-107).